The sequence spans 267 residues: MLKKRSRSKQALMAETNQSQNQKQSKTTPFPRLFTAFSSFKSFTENDAVASPTSILDTKPFSVLKNPFGSDNPKTQEPETRLKLEPKRIGLAIVDSLIQDETPEPGPRSGTILFGSQLRIRVPDSPISSSDFGIKTRNSQPETKKPGSESGLGSPRIISGYFPASDMELSEDYTCVTCHGPNPRTIHIFDNCIVESQPGVVFFRSSDPVNESDSDYSPPDSFLSCCCNCKKSLGPRDDIFMYRGDRAFCSSECRSIEMMMSEENDTK.

2 disordered regions span residues 1–29 (MLKK…KTTP) and 124–156 (DSPI…GSPR). 2 stretches are compositionally biased toward polar residues: residues 15–28 (ETNQ…SKTT) and 126–141 (PISS…NSQP). An FLZ-type zinc finger spans residues 221–265 (SFLSCCCNCKKSLGPRDDIFMYRGDRAFCSSECRSIEMMMSEEND).

It belongs to the FLZ family. Interacts with KIN10 and KIN11 via its FLZ-type zinc finger domain. Interacts with KINB1, KINB2, KINB3 and SNF4 via its N-terminal part. Interacts with HB21/ZHD3.

Its function is as follows. May act as an adapter to facilitate the interaction of SnRK1 complex with effector proteins, conferring tissue- and stimulus-type specific differences in the SnRK1 regulation pathway. In Arabidopsis thaliana (Mouse-ear cress), this protein is FCS-Like Zinc finger 8.